The following is a 156-amino-acid chain: Cellulose synthase operon protein D (156 aa).

The protein operates within glycan metabolism; bacterial cellulose biosynthesis. Functionally, may have a major role in the perfection of crystallization, involved either in the pore structure itself or in the organization of the pores within the linear array of terminal synthesizing complexes (TCs). This Komagataeibacter sucrofermentans (strain ATCC 700178 / DSM 15973 / CECT 7291 / JCM 9730 / LMG 18788 / BPR 2001) (Acetobacter xylinus subsp. sucrofermentans) protein is Cellulose synthase operon protein D.